Consider the following 149-residue polypeptide: Large ribosomal subunit protein uL24 (149 aa).

It belongs to the universal ribosomal protein uL24 family. As to quaternary structure, part of the 50S ribosomal subunit.

In terms of biological role, one of two assembly initiator proteins, it binds directly to the 5'-end of the 23S rRNA, where it nucleates assembly of the 50S subunit. Functionally, one of the proteins that surrounds the polypeptide exit tunnel on the outside of the subunit. This is Large ribosomal subunit protein uL24 from Nostoc sp. (strain PCC 7120 / SAG 25.82 / UTEX 2576).